Consider the following 183-residue polypeptide: Inosine triphosphate pyrophosphatase (183 aa).

8 to 13 (TGNKNK) contacts ITP. Glutamate 36 lines the Mg(2+) pocket. ITP-binding positions include lysine 48, 64-65 (DT), lysine 81, 140-143 (FGWD), lysine 161, and 166-167 (HR).

Belongs to the HAM1 NTPase family. Homodimer. It depends on Mg(2+) as a cofactor. Mn(2+) is required as a cofactor.

It localises to the cytoplasm. It is found in the nucleus. It carries out the reaction ITP + H2O = IMP + diphosphate + H(+). The catalysed reaction is dITP + H2O = dIMP + diphosphate + H(+). It catalyses the reaction XTP + H2O = XMP + diphosphate + H(+). Pyrophosphatase that hydrolyzes non-canonical purine nucleotides such as inosine triphosphate (ITP), deoxyinosine triphosphate (dITP) or xanthosine 5'-triphosphate (XTP) to their respective monophosphate derivatives. The enzyme does not distinguish between the deoxy- and ribose forms. Probably excludes non-canonical purines from RNA and DNA precursor pools, thus preventing their incorporation into RNA and DNA and avoiding chromosomal lesions. This Ajellomyces capsulatus (strain G186AR / H82 / ATCC MYA-2454 / RMSCC 2432) (Darling's disease fungus) protein is Inosine triphosphate pyrophosphatase.